Here is a 241-residue protein sequence, read N- to C-terminus: tRNA (guanine-N(7)-)-methyltransferase (241 aa).

The disordered stretch occupies residues 1–20; that stretch reads MTESNDTPIQPEAGDERQHR. Residues Glu71, Glu96, Asp123, and Asp146 each contribute to the S-adenosyl-L-methionine site. Asp146 is an active-site residue. Substrate-binding positions include Lys150, Asp182, and 219–222; that span reads TKFE.

It belongs to the class I-like SAM-binding methyltransferase superfamily. TrmB family.

The catalysed reaction is guanosine(46) in tRNA + S-adenosyl-L-methionine = N(7)-methylguanosine(46) in tRNA + S-adenosyl-L-homocysteine. It functions in the pathway tRNA modification; N(7)-methylguanine-tRNA biosynthesis. In terms of biological role, catalyzes the formation of N(7)-methylguanine at position 46 (m7G46) in tRNA. This is tRNA (guanine-N(7)-)-methyltransferase from Pseudomonas fluorescens (strain ATCC BAA-477 / NRRL B-23932 / Pf-5).